The chain runs to 175 residues: Large ribosomal subunit protein uL10 (175 aa).

Belongs to the universal ribosomal protein uL10 family. As to quaternary structure, part of the ribosomal stalk of the 50S ribosomal subunit. The N-terminus interacts with L11 and the large rRNA to form the base of the stalk. The C-terminus forms an elongated spine to which L12 dimers bind in a sequential fashion forming a multimeric L10(L12)X complex.

Its function is as follows. Forms part of the ribosomal stalk, playing a central role in the interaction of the ribosome with GTP-bound translation factors. The protein is Large ribosomal subunit protein uL10 of Methylococcus capsulatus (strain ATCC 33009 / NCIMB 11132 / Bath).